The chain runs to 294 residues: 4-hydroxy-tetrahydrodipicolinate synthase (294 aa).

Residue threonine 47 coordinates pyruvate. The Proton donor/acceptor role is filled by tyrosine 135. Lysine 163 (schiff-base intermediate with substrate) is an active-site residue. Threonine 205 lines the pyruvate pocket.

It belongs to the DapA family. As to quaternary structure, homotetramer; dimer of dimers.

The protein localises to the cytoplasm. The enzyme catalyses L-aspartate 4-semialdehyde + pyruvate = (2S,4S)-4-hydroxy-2,3,4,5-tetrahydrodipicolinate + H2O + H(+). The protein operates within amino-acid biosynthesis; L-lysine biosynthesis via DAP pathway; (S)-tetrahydrodipicolinate from L-aspartate: step 3/4. Catalyzes the condensation of (S)-aspartate-beta-semialdehyde [(S)-ASA] and pyruvate to 4-hydroxy-tetrahydrodipicolinate (HTPA). The sequence is that of 4-hydroxy-tetrahydrodipicolinate synthase from Rickettsia akari (strain Hartford).